Consider the following 128-residue polypeptide: Protein BEX2 (128 aa).

Positions 1-44 (MMPKEEQVLKNLTMENANEENEKKDEKEQDANKGEPLALSLGAG) are disordered. The segment covering 20 to 33 (ENEKKDEKEQDANK) has biased composition (basic and acidic residues). R50 bears the Omega-N-methylarginine mark. Residues 103–128 (QLSHSLRAVSTDPPHHEHNDEFCLMP) form a disordered region. Over residues 115–128 (PPHHEHNDEFCLMP) the composition is skewed to basic and acidic residues. The his cluster stretch occupies residues 117 to 121 (HHEHN). C125 serves as a coordination point for Zn(2+).

This sequence belongs to the BEX family. Interacts with LMO2, possibly leading to regulate the transcriptional activity of a DNA-binding complex containing LMO2. Interacts with OMP.

The protein resides in the cytoplasm. It localises to the nucleus. Regulator of mitochondrial apoptosis and G1 cell cycle. Regulates the level of PP2A regulatory subunit B and PP2A phosphatase activity. In absence of reductive stress, acts as a pseudosubstrate for the CRL2(FEM1B) complex: associates with FEM1B via zinc, thereby preventing association between FEM1B and its substrates. This chain is Protein BEX2 (BEX2), found in Bos taurus (Bovine).